A 127-amino-acid polypeptide reads, in one-letter code: Aspartate 1-decarboxylase (127 aa).

The Schiff-base intermediate with substrate; via pyruvic acid role is filled by Ser-25. Ser-25 is modified (pyruvic acid (Ser)). Position 57 (Thr-57) interacts with substrate. Residue Tyr-58 is the Proton donor of the active site. Gly-73–Ala-75 lines the substrate pocket.

This sequence belongs to the PanD family. In terms of assembly, heterooctamer of four alpha and four beta subunits. Pyruvate serves as cofactor. Is synthesized initially as an inactive proenzyme, which is activated by self-cleavage at a specific serine bond to produce a beta-subunit with a hydroxyl group at its C-terminus and an alpha-subunit with a pyruvoyl group at its N-terminus.

It is found in the cytoplasm. The enzyme catalyses L-aspartate + H(+) = beta-alanine + CO2. It participates in cofactor biosynthesis; (R)-pantothenate biosynthesis; beta-alanine from L-aspartate: step 1/1. Functionally, catalyzes the pyruvoyl-dependent decarboxylation of aspartate to produce beta-alanine. This is Aspartate 1-decarboxylase from Listeria monocytogenes serotype 4b (strain CLIP80459).